A 149-amino-acid polypeptide reads, in one-letter code: Gamma-glutamylaminecyclotransferase (149 aa).

7 to 10 (YGTL) provides a ligand contact to substrate. E82 acts as the Proton acceptor in catalysis.

The protein belongs to the gamma-glutamylcyclotransferase family. In terms of assembly, monomer.

It carries out the reaction epsilon-(gamma-L-glutamyl)-L-lysine = 5-oxo-L-proline + L-lysine. In terms of biological role, contributes to degradation of proteins cross-linked by transglutaminases by degrading the cross-link between a lysine and a glutamic acid residue. Catalyzes the formation of 5-oxo-L-proline from L-gamma-glutamyl-L-epsilon-lysine. Inactive with L-gamma-glutamyl-alpha-amino acid substrates such as L-gamma-glutamyl-L-alpha-cysteine and L-gamma-glutamyl-L-alpha-alanine. This Rattus norvegicus (Rat) protein is Gamma-glutamylaminecyclotransferase (Ggact).